A 1025-amino-acid chain; its full sequence is Exportin-T (1025 aa).

Belongs to the exportin family.

Its subcellular location is the nucleus. The protein localises to the cytoplasm. TRNA nucleus export receptor which facilitates tRNA translocation across the nuclear pore complex. Involved in pre-tRNA splicing, probably by affecting the interaction of pre-tRNA with splicing endonuclease. The polypeptide is Exportin-T (LOS1) (Candida albicans (strain SC5314 / ATCC MYA-2876) (Yeast)).